We begin with the raw amino-acid sequence, 712 residues long: Polyphosphate kinase (712 aa).

ATP is bound at residue Asn49. Residues Arg398 and Arg428 each contribute to the Mg(2+) site. The active-site Phosphohistidine intermediate is the His458. ATP is bound by residues Tyr491, Arg587, and His615.

The protein belongs to the polyphosphate kinase 1 (PPK1) family. Mg(2+) serves as cofactor. An intermediate of this reaction is the autophosphorylated ppk in which a phosphate is covalently linked to a histidine residue through a N-P bond.

The enzyme catalyses [phosphate](n) + ATP = [phosphate](n+1) + ADP. Catalyzes the reversible transfer of the terminal phosphate of ATP to form a long-chain polyphosphate (polyP). This Prochlorococcus marinus (strain MIT 9313) protein is Polyphosphate kinase.